A 304-amino-acid chain; its full sequence is UDP-N-acetylenolpyruvoylglucosamine reductase (304 aa).

Residues 34–198 (IGGKADFLVW…LEVVFALQPG (165 aa)) enclose the FAD-binding PCMH-type domain. Residue Arg177 is part of the active site. Ser227 serves as the catalytic Proton donor. Glu297 is a catalytic residue.

It belongs to the MurB family. It depends on FAD as a cofactor.

The protein resides in the cytoplasm. The enzyme catalyses UDP-N-acetyl-alpha-D-muramate + NADP(+) = UDP-N-acetyl-3-O-(1-carboxyvinyl)-alpha-D-glucosamine + NADPH + H(+). It functions in the pathway cell wall biogenesis; peptidoglycan biosynthesis. Its function is as follows. Cell wall formation. This Geobacillus thermodenitrificans (strain NG80-2) protein is UDP-N-acetylenolpyruvoylglucosamine reductase.